We begin with the raw amino-acid sequence, 306 residues long: tRNA dimethylallyltransferase 2 (306 aa).

An ATP-binding site is contributed by 11-18 (GPTASGKT). 13-18 (TASGKT) is a binding site for substrate. The tract at residues 36 to 39 (DSRQ) is interaction with substrate tRNA.

This sequence belongs to the IPP transferase family. In terms of assembly, monomer. It depends on Mg(2+) as a cofactor.

It carries out the reaction adenosine(37) in tRNA + dimethylallyl diphosphate = N(6)-dimethylallyladenosine(37) in tRNA + diphosphate. Functionally, catalyzes the transfer of a dimethylallyl group onto the adenine at position 37 in tRNAs that read codons beginning with uridine, leading to the formation of N6-(dimethylallyl)adenosine (i(6)A). The protein is tRNA dimethylallyltransferase 2 of Bacteroides fragilis (strain ATCC 25285 / DSM 2151 / CCUG 4856 / JCM 11019 / LMG 10263 / NCTC 9343 / Onslow / VPI 2553 / EN-2).